We begin with the raw amino-acid sequence, 314 residues long: WD repeat domain-containing protein 83 (314 aa).

WD repeat units lie at residues 23–62 (CNQG…LLKT), 65–104 (GHGY…VVRK), 107–146 (GHAG…PDAI), 151–188 (EAKD…MCAD), 189–228 (YLGS…LLGE), 231–272 (GHQN…LVLK), and 275–313 (VGKA…EEGG).

Belongs to the WD repeat MORG1 family.

The protein localises to the cytoplasm. Functionally, molecular scaffold protein for various multimeric protein complexes. Acts as a module in the assembly of a multicomponent scaffold for the ERK pathway, linking ERK responses to specific agonists. Also involved in response to hypoxia by acting as a negative regulator of HIF1A/HIF-1-alpha. The chain is WD repeat domain-containing protein 83 (wdr83) from Xenopus laevis (African clawed frog).